Here is a 226-residue protein sequence, read N- to C-terminus: Urease accessory protein UreG (226 aa).

Residues 1 to 26 (MPPHFLDGQPHGHTDRPRRVRQPGEP) are disordered. Position 33-40 (33-40 (GPVGSGKT)) interacts with GTP.

This sequence belongs to the SIMIBI class G3E GTPase family. UreG subfamily. Homodimer. UreD, UreF and UreG form a complex that acts as a GTP-hydrolysis-dependent molecular chaperone, activating the urease apoprotein by helping to assemble the nickel containing metallocenter of UreC. The UreE protein probably delivers the nickel.

It is found in the cytoplasm. Facilitates the functional incorporation of the urease nickel metallocenter. This process requires GTP hydrolysis, probably effectuated by UreG. This chain is Urease accessory protein UreG, found in Mycolicibacterium vanbaalenii (strain DSM 7251 / JCM 13017 / BCRC 16820 / KCTC 9966 / NRRL B-24157 / PYR-1) (Mycobacterium vanbaalenii).